We begin with the raw amino-acid sequence, 133 residues long: Basic leucine zipper transcriptional factor ATF-like 3 (133 aa).

The segment at 1–68 (MSQGPPAGGV…EHESLEQENS (68 aa)) is disordered. 2 positions are modified to phosphoserine: serine 2 and serine 24. Over residues 11-24 (LQSSVAAPGNQPQS) the composition is skewed to polar residues. The region spanning 28–91 (DDRKVRRREK…RHLTEALKEH (64 aa)) is the bZIP domain. Positions 30–55 (RKVRRREKNRVAAQRSRKKQTQKSDK) are basic motif. Positions 51-68 (QKSDKLHEEHESLEQENS) are enriched in basic and acidic residues. Residues 56-84 (LHEEHESLEQENSVLRREIAKLKEELRHL) form a leucine-zipper region.

It belongs to the bZIP family. In terms of assembly, heterodimer; heterodimerizes with JUN family proteins. Interacts with JUN. In terms of tissue distribution, ubiquitously expressed.

The protein localises to the nucleus. Its function is as follows. AP-1 family transcription factor that controls the differentiation of CD8(+) thymic conventional dendritic cells in the immune system. Acts via the formation of a heterodimer with JUN family proteins that recognizes and binds DNA sequence 5'-TGA[CG]TCA-3' and regulates expression of target genes. Required for development of CD8-alpha(+) classical dendritic cells (cDCs) and related CD103(+) dendritic cells that cross-present antigens to CD8 T-cells and produce interleukin-12 (IL12) in response to pathogens. This is Basic leucine zipper transcriptional factor ATF-like 3 (Batf3) from Rattus norvegicus (Rat).